Consider the following 329-residue polypeptide: Galactosylgalactosylxylosylprotein 3-beta-glucuronosyltransferase 2 (329 aa).

Residues 1–2 (MK) lie on the Cytoplasmic side of the membrane. Residues 3-23 (SALFSRFFILLPWILIVIIML) form a helical; Signal-anchor for type II membrane protein membrane-spanning segment. The Lumenal segment spans residues 24–329 (DVDTRRPAPP…YRLDTVKIEV (306 aa)). The interval 45 to 87 (VGRGGARLPPRRGGPDSGPGRGWEKRNESRPHARPRPEPPLPT) is disordered. A compositionally biased stretch (basic and acidic residues) spans 66 to 81 (GWEKRNESRPHARPRP). An N-linked (GlcNAc...) asparagine glycan is attached at Asn71. UDP-alpha-D-glucuronate is bound by residues 93–95 (PTY), Asp124, Arg161, Arg166, and 191–193 (DDD). Asp193 is a binding site for Mn(2+). Positions 240–249 (WRADRPFAID) are interaction with galactose moiety of substrate glycoprotein. Glu279 functions as the Proton donor/acceptor in the catalytic mechanism. N-linked (GlcNAc...) asparagine glycosylation is present at Asn298. Residue 306-308 (HTR) coordinates UDP-alpha-D-glucuronate.

The protein belongs to the glycosyltransferase 43 family. As to quaternary structure, homodimer. The cofactor is Mn(2+).

The protein resides in the golgi apparatus membrane. The enzyme catalyses 3-O-(beta-D-galactosyl-(1-&gt;3)-beta-D-galactosyl-(1-&gt;4)-beta-D-xylosyl)-L-seryl-[protein] + UDP-alpha-D-glucuronate = 3-O-(beta-D-GlcA-(1-&gt;3)-beta-D-Gal-(1-&gt;3)-beta-D-Gal-(1-&gt;4)-beta-D-Xyl)-L-seryl-[protein] + UDP + H(+). It functions in the pathway protein modification; protein glycosylation. Involved in the biosynthesis of L2/HNK-1 carbohydrate epitope on both glycolipids and glycoproteins. This chain is Galactosylgalactosylxylosylprotein 3-beta-glucuronosyltransferase 2 (B3GAT2), found in Canis lupus familiaris (Dog).